Reading from the N-terminus, the 111-residue chain is Putative splicing factor C222.18 (111 aa).

The region spanning 18–95 is the RRM domain; the sequence is HTLYIRNFGT…DIIFVEWAKS (78 aa).

This sequence belongs to the splicing factor SR family.

The protein resides in the nucleus. Functionally, has a role in pre-mRNA splicing where it is involved in spliceosome assembly. The sequence is that of Putative splicing factor C222.18 from Schizosaccharomyces pombe (strain 972 / ATCC 24843) (Fission yeast).